The primary structure comprises 388 residues: Succinyl-diaminopimelate desuccinylase (388 aa).

Histidine 84 contacts Zn(2+). Aspartate 86 is an active-site residue. Aspartate 115 is a binding site for Zn(2+). The active-site Proton acceptor is glutamate 146. 3 residues coordinate Zn(2+): glutamate 147, glutamate 175, and histidine 360.

Belongs to the peptidase M20A family. DapE subfamily. Homodimer. Zn(2+) serves as cofactor. Requires Co(2+) as cofactor.

The catalysed reaction is N-succinyl-(2S,6S)-2,6-diaminopimelate + H2O = (2S,6S)-2,6-diaminopimelate + succinate. It functions in the pathway amino-acid biosynthesis; L-lysine biosynthesis via DAP pathway; LL-2,6-diaminopimelate from (S)-tetrahydrodipicolinate (succinylase route): step 3/3. Its function is as follows. Catalyzes the hydrolysis of N-succinyl-L,L-diaminopimelic acid (SDAP), forming succinate and LL-2,6-diaminopimelate (DAP), an intermediate involved in the bacterial biosynthesis of lysine and meso-diaminopimelic acid, an essential component of bacterial cell walls. The chain is Succinyl-diaminopimelate desuccinylase from Helicobacter pylori (strain J99 / ATCC 700824) (Campylobacter pylori J99).